The sequence spans 625 residues: pH-response transcription factor pacC/RIM101 (625 aa).

A compositionally biased stretch (low complexity) spans 1–34 (MSSQDQQQQQQPAQTQTSTSSSSNNENATTATSS). Positions 1 to 35 (MSSQDQQQQQQPAQTQTSTSSSSNNENATTATSSI) are disordered. C2H2-type zinc fingers lie at residues 45-70 (LLCQWEKCSERCPTPEALFDHICEKH), 81-105 (LTCGWNSCRTTTVKRDHITSHIRVH), and 111-133 (HKCEFCGKAFKRPQDLKKHVKTH). The span at 391–416 (APMTATHSSHSVSSGTPALTPPSSSV) shows a compositional bias: polar residues. The segment at 391–440 (APMTATHSSHSVSSGTPALTPPSSSVSYTSGNSPMSSSGMSPISRHSSTS) is disordered. Low complexity predominate over residues 417–438 (SYTSGNSPMSSSGMSPISRHSS). A YPX[LI] motif 1 motif is present at residues 444–447 (YPNL). Disordered regions lie at residues 455-543 (SPHH…SPSV) and 584-625 (VKDE…DDDE). Composition is skewed to polar residues over residues 461 to 472 (TAPTSTLGTNFD) and 490 to 514 (GLNSSQYRESMETSTVGSPTPSPKE). Residues 615 to 618 (YPVL) carry the YPX[LI] motif 2 motif.

The protein belongs to the pacC/RIM101 family. Post-translationally, activated by C-terminal proteolytic cleavage by signaling protease (probably palB/RIM13) at neutral to alkaline ambient pH.

Its subcellular location is the cytoplasm. The protein resides in the nucleus. Transcription factor that mediates regulation of both acid- and alkaline-expressed genes in response to ambient pH. At alkaline ambient pH, activates transcription of alkaline-expressed genes (including pac1 itself) and represses transcription of acid-expressed genes. In Sclerotinia sclerotiorum (White mold), this protein is pH-response transcription factor pacC/RIM101 (pac1).